Here is a 253-residue protein sequence, read N- to C-terminus: Tryptophan synthase alpha chain (253 aa).

Active-site proton acceptor residues include Glu47 and Asp58.

It belongs to the TrpA family. In terms of assembly, tetramer of two alpha and two beta chains.

It catalyses the reaction (1S,2R)-1-C-(indol-3-yl)glycerol 3-phosphate + L-serine = D-glyceraldehyde 3-phosphate + L-tryptophan + H2O. Its pathway is amino-acid biosynthesis; L-tryptophan biosynthesis; L-tryptophan from chorismate: step 5/5. In terms of biological role, the alpha subunit is responsible for the aldol cleavage of indoleglycerol phosphate to indole and glyceraldehyde 3-phosphate. This chain is Tryptophan synthase alpha chain, found in Lactococcus lactis subsp. lactis (strain IL1403) (Streptococcus lactis).